The sequence spans 447 residues: Adenylosuccinate synthetase (447 aa).

Residues 35 to 41 (GDEGKGK) and 63 to 65 (GHT) each bind GTP. The Proton acceptor role is filled by D36. 2 residues coordinate Mg(2+): D36 and G63. IMP contacts are provided by residues 36–39 (DEGK), 61–64 (NAGH), T153, R167, N245, T260, and R324. H64 serves as the catalytic Proton donor. Residue 320 to 326 (VTTKRKR) coordinates substrate. Residues R326, 352-354 (KLD), and 435-437 (GVG) contribute to the GTP site.

The protein belongs to the adenylosuccinate synthetase family. As to quaternary structure, homodimer. It depends on Mg(2+) as a cofactor.

It is found in the cytoplasm. The catalysed reaction is IMP + L-aspartate + GTP = N(6)-(1,2-dicarboxyethyl)-AMP + GDP + phosphate + 2 H(+). The protein operates within purine metabolism; AMP biosynthesis via de novo pathway; AMP from IMP: step 1/2. Plays an important role in the de novo pathway and in the salvage pathway of purine nucleotide biosynthesis. Catalyzes the first committed step in the biosynthesis of AMP from IMP. The chain is Adenylosuccinate synthetase from Drosophila erecta (Fruit fly).